Reading from the N-terminus, the 672-residue chain is tRNA 5-methylaminomethyl-2-thiouridine biosynthesis bifunctional protein MnmC (672 aa).

The segment at 1 to 235 (MTRVLEPAEP…KRDMTVARFA (235 aa)) is tRNA (mnm(5)s(2)U34)-methyltransferase. Residues 259 to 672 (IGAGLAGCAV…SAGPGVDAAG (414 aa)) form an FAD-dependent cmnm(5)s(2)U34 oxidoreductase region.

The protein in the N-terminal section; belongs to the methyltransferase superfamily. tRNA (mnm(5)s(2)U34)-methyltransferase family. In the C-terminal section; belongs to the DAO family. It depends on FAD as a cofactor.

The protein localises to the cytoplasm. It catalyses the reaction 5-aminomethyl-2-thiouridine(34) in tRNA + S-adenosyl-L-methionine = 5-methylaminomethyl-2-thiouridine(34) in tRNA + S-adenosyl-L-homocysteine + H(+). Catalyzes the last two steps in the biosynthesis of 5-methylaminomethyl-2-thiouridine (mnm(5)s(2)U) at the wobble position (U34) in tRNA. Catalyzes the FAD-dependent demodification of cmnm(5)s(2)U34 to nm(5)s(2)U34, followed by the transfer of a methyl group from S-adenosyl-L-methionine to nm(5)s(2)U34, to form mnm(5)s(2)U34. The chain is tRNA 5-methylaminomethyl-2-thiouridine biosynthesis bifunctional protein MnmC from Cupriavidus metallidurans (strain ATCC 43123 / DSM 2839 / NBRC 102507 / CH34) (Ralstonia metallidurans).